The chain runs to 71 residues: UPF0437 protein asl1434 (71 aa).

It belongs to the UPF0437 family.

This chain is UPF0437 protein asl1434, found in Nostoc sp. (strain PCC 7120 / SAG 25.82 / UTEX 2576).